A 438-amino-acid polypeptide reads, in one-letter code: Cell division cycle-associated 7-like protein (438 aa).

The short motif at 9 to 33 (IPKEVADIFSAPSDDEEFVGFQDDV) is the Integrase domain-binding motif 1 (IBM1) element. At serine 21 the chain carries Phosphoserine. The tract at residues 56 to 115 (VCFRSKYFTEELRRIFKEDTDSEMEDFEGFTESELNMSSNPELMESELSDSDKAYPVMND) is PSIP1-binding. Residues 63–89 (FTEELRRIFKEDTDSEMEDFEGFTESE) carry the Integrase domain-binding motif 2 (IBM2) motif. The interval 74-199 (DTDSEMEDFE…ESRAESQENS (126 aa)) is disordered. Threonine 75 carries the phosphothreonine modification. Residues 75–86 (TDSEMEDFEGFT) show a composition bias toward acidic residues. Residue serine 77 is modified to Phosphoserine. Threonine 86 bears the Phosphothreonine mark. Phosphoserine occurs at positions 101, 104, 135, 136, and 159. The span at 152 to 167 (RTPDKDSSHLLDSKTD) shows a compositional bias: basic and acidic residues. Residues 168–177 (LRRKKSSRQP) show a composition bias toward basic residues. Residues serine 183 and serine 185 each carry the phosphoserine modification. Positions 201-223 (ALLKRAMNIKENKAMLAQLLAEL) are MYC-binding. Glycyl lysine isopeptide (Lys-Gly) (interchain with G-Cter in SUMO2) cross-links involve residues lysine 210 and lysine 213. Serine 249 bears the Phosphoserine mark.

In terms of assembly, interacts with MYC. Interacts (via IBM motifs) with PSIP1 (via IBD domain); phosphorylation increases its affinity for PSIP1. Post-translationally, phosphorylation increases its interaction with PSIP1. As to expression, expressed in all tissues but not detected in total brain.

It localises to the cytoplasm. It is found in the nucleus. In terms of biological role, plays a role in transcriptional regulation as a repressor that inhibits monoamine oxidase A (MAOA) activity and gene expression by binding to the promoter. Plays an important oncogenic role in mediating the full transforming effect of MYC in medulloblastoma cells. Involved in apoptotic signaling pathways; May act downstream of P38-kinase and BCL-2, but upstream of CASP3/caspase-3 as well as CCND1/cyclin D1 and E2F1. The chain is Cell division cycle-associated 7-like protein (Cdca7l) from Mus musculus (Mouse).